The chain runs to 204 residues: CASP-like protein 2U2 (204 aa).

Topologically, residues M1 to K36 are cytoplasmic. The helical transmembrane segment at G37–L57 threads the bilayer. The Extracellular segment spans residues K58–S84. The N-linked (GlcNAc...) asparagine glycan is linked to N77. A helical membrane pass occupies residues L85–L105. Topologically, residues S106–T117 are cytoplasmic. A helical membrane pass occupies residues V118–A138. Residues A139–H170 are Extracellular-facing. Residues F171–I191 form a helical membrane-spanning segment. The Cytoplasmic portion of the chain corresponds to S192–K204.

This sequence belongs to the Casparian strip membrane proteins (CASP) family. As to quaternary structure, homodimer and heterodimers.

The protein resides in the cell membrane. This is CASP-like protein 2U2 from Selaginella moellendorffii (Spikemoss).